The sequence spans 239 residues: Geranylgeranylglyceryl phosphate synthase (239 aa).

Aspartate 18 and serine 45 together coordinate Mg(2+). Residues 166-172 (YLEAGSG), 197-198 (GG), and 219-220 (GT) each bind sn-glycerol 1-phosphate.

This sequence belongs to the GGGP/HepGP synthase family. Group II subfamily. Mg(2+) serves as cofactor.

It localises to the cytoplasm. It carries out the reaction sn-glycerol 1-phosphate + (2E,6E,10E)-geranylgeranyl diphosphate = sn-3-O-(geranylgeranyl)glycerol 1-phosphate + diphosphate. It participates in membrane lipid metabolism; glycerophospholipid metabolism. In terms of biological role, prenyltransferase that catalyzes the transfer of the geranylgeranyl moiety of geranylgeranyl diphosphate (GGPP) to the C3 hydroxyl of sn-glycerol-1-phosphate (G1P). This reaction is the first ether-bond-formation step in the biosynthesis of archaeal membrane lipids. This Pyrobaculum islandicum (strain DSM 4184 / JCM 9189 / GEO3) protein is Geranylgeranylglyceryl phosphate synthase.